The primary structure comprises 904 residues: Phosphoenolpyruvate carboxylase (904 aa).

Residues 52 to 71 (ISRRESDAPPSTLSEQLTGR) form a disordered region. Catalysis depends on residues histidine 151 and lysine 570.

The protein belongs to the PEPCase type 1 family. The cofactor is Mg(2+).

It carries out the reaction oxaloacetate + phosphate = phosphoenolpyruvate + hydrogencarbonate. Functionally, forms oxaloacetate, a four-carbon dicarboxylic acid source for the tricarboxylic acid cycle. The polypeptide is Phosphoenolpyruvate carboxylase (Xanthomonas oryzae pv. oryzae (strain MAFF 311018)).